The following is a 182-amino-acid chain: Glutathione-regulated potassium-efflux system ancillary protein KefG (182 aa).

This sequence belongs to the NAD(P)H dehydrogenase (quinone) family. KefG subfamily. Interacts with KefB.

Its subcellular location is the cell inner membrane. It catalyses the reaction a quinone + NADH + H(+) = a quinol + NAD(+). The enzyme catalyses a quinone + NADPH + H(+) = a quinol + NADP(+). Its function is as follows. Regulatory subunit of a potassium efflux system that confers protection against electrophiles. Required for full activity of KefB. This chain is Glutathione-regulated potassium-efflux system ancillary protein KefG, found in Yersinia pseudotuberculosis serotype O:1b (strain IP 31758).